We begin with the raw amino-acid sequence, 372 residues long: Aminomethyltransferase (372 aa).

It belongs to the GcvT family. In terms of assembly, the glycine cleavage system is composed of four proteins: P, T, L and H.

The catalysed reaction is N(6)-[(R)-S(8)-aminomethyldihydrolipoyl]-L-lysyl-[protein] + (6S)-5,6,7,8-tetrahydrofolate = N(6)-[(R)-dihydrolipoyl]-L-lysyl-[protein] + (6R)-5,10-methylene-5,6,7,8-tetrahydrofolate + NH4(+). Functionally, the glycine cleavage system catalyzes the degradation of glycine. The chain is Aminomethyltransferase from Burkholderia cenocepacia (strain ATCC BAA-245 / DSM 16553 / LMG 16656 / NCTC 13227 / J2315 / CF5610) (Burkholderia cepacia (strain J2315)).